Here is a 332-residue protein sequence, read N- to C-terminus: MPEGPLVRKFHHLVSPFVGQQVVKTGGSSKKLQPASLQCLWLQDTQVNGKKLFLRFDPDEEMGPPGSSPPPEPPQKEAQKEGAADPKQVGEPSGQKTPDGSSQSAELVPQGEDDSEYLERDAPAGDAGRWLRVSFGLFGSVWVNEFSRAKQANKRGDWRDPSPRLVLHCGGGGFLAFYNCQMSWSSSPVVTPTCDILSEKFHRGQALEALGQAQPVCYTLLDQRYFSGLGNIIKNEALYRAGIHPLSLGSVLSASRREVLVDHVVEFSTAWLQGKFQGRPQRTQVYQREQCPAGHQVMKEAFGPQDGLQRLTWWCPQCQPQLSEEPEQRQFS.

Proline 2 acts as the Schiff-base intermediate with DNA in catalysis. Catalysis depends on glutamate 3, which acts as the Proton donor. Residue lysine 50 is the Proton donor; for beta-elimination activity of the active site. Lysine 50 is subject to N6-acetyllysine. Positions 56-121 (FDPDEEMGPP…EDDSEYLERD (66 aa)) are disordered. Phosphoserine is present on serine 68. Basic and acidic residues predominate over residues 74 to 84 (PQKEAQKEGAA). Over residues 94–105 (GQKTPDGSSQSA) the composition is skewed to polar residues. Position 154 is an N6-acetyllysine (lysine 154). Residue asparagine 231 coordinates DNA. The FPG-type zinc finger occupies 284 to 320 (QVYQREQCPAGHQVMKEAFGPQDGLQRLTWWCPQCQP). The active-site Proton donor; for delta-elimination activity is the arginine 310.

It belongs to the FPG family. As to quaternary structure, binds EP300.

It is found in the nucleus. It catalyses the reaction 2'-deoxyribonucleotide-(2'-deoxyribose 5'-phosphate)-2'-deoxyribonucleotide-DNA = a 3'-end 2'-deoxyribonucleotide-(2,3-dehydro-2,3-deoxyribose 5'-phosphate)-DNA + a 5'-end 5'-phospho-2'-deoxyribonucleoside-DNA + H(+). With respect to regulation, acetylation of Lys-50 leads to loss of DNA nicking activity. In terms of biological role, involved in base excision repair of DNA damaged by oxidation or by mutagenic agents. Has DNA glycosylase activity towards 5-hydroxyuracil and other oxidized derivatives of cytosine with a preference for mismatched double-stranded DNA (DNA bubbles). Has low or no DNA glycosylase activity towards thymine glycol, 2-hydroxyadenine, hypoxanthine and 8-oxoguanine. Has AP (apurinic/apyrimidinic) lyase activity and introduces nicks in the DNA strand. Cleaves the DNA backbone by beta-delta elimination to generate a single-strand break at the site of the removed base with both 3'- and 5'-phosphates. This chain is Endonuclease 8-like 2 (NEIL2), found in Pongo abelii (Sumatran orangutan).